A 356-amino-acid chain; its full sequence is Geranylgeranyl pyrophosphate synthase penG (356 aa).

Residues K83, R86, and H115 each contribute to the isopentenyl diphosphate site. Positions 122 and 126 each coordinate Mg(2+). Residue R131 participates in dimethylallyl diphosphate binding. R132 lines the isopentenyl diphosphate pocket. Residues K209, T210, and Q243 each coordinate dimethylallyl diphosphate. D246 contributes to the Mg(2+) binding site. Dimethylallyl diphosphate is bound by residues N250, K260, and K270.

The protein belongs to the FPP/GGPP synthase family. Requires Mg(2+) as cofactor.

The catalysed reaction is isopentenyl diphosphate + dimethylallyl diphosphate = (2E)-geranyl diphosphate + diphosphate. It catalyses the reaction isopentenyl diphosphate + (2E)-geranyl diphosphate = (2E,6E)-farnesyl diphosphate + diphosphate. The enzyme catalyses isopentenyl diphosphate + (2E,6E)-farnesyl diphosphate = (2E,6E,10E)-geranylgeranyl diphosphate + diphosphate. Its pathway is secondary metabolite biosynthesis. Geranylgeranyl pyrophosphate synthase; part of the gene cluster that mediates the biosynthesis of the indole diterpenes penitrems. The geranylgeranyl diphosphate (GGPP) synthase ptmG catalyzes the first step in penitrem biosynthesis via conversion of farnesyl pyrophosphate and isopentyl pyrophosphate into geranylgeranyl pyrophosphate (GGPP). Condensation of indole-3-glycerol phosphate with GGPP by the prenyl transferase ptmC then forms 3-geranylgeranylindole (3-GGI). Epoxidation by the FAD-dependent monooxygenase ptmM leads to a epoxidized-GGI that is substrate of the terpene cyclase ptmB for cyclization to yield paspaline. Paspaline is subsequently converted to 13-desoxypaxilline by the cytochrome P450 monooxygenase ptmP, the latter being then converted to paxilline by the cytochrome P450 monooxygenase ptmQ. Paxilline is converted to beta-paxitriol via C-10 ketoreduction by the short-chain dehydrogenase ptmH which can be monoprenylated at the C-20 by the indole diterpene prenyltransferase ptmD. A two-step elimination (acetylation and elimination) process performed by the O-acetyltransferase ptmV and ptmI leads to the production of the prenylated form of penijanthine. The FAD-linked oxidoreductase ptmO then converts the prenylated form of penijanthine into PC-M5 which is in turn transformed into PC-M4 by the aromatic dimethylallyltransferase ptmE. Five sequential oxidative transformations performed by the cytochrome P450 monooxygenases ptmK, ptmU, ptmL, ptmN and ptmJ yield the various penitrem compounds. PtmK, ptmU and ptmM are involved in the formation of the key bicyclic ring of penitrem C via the formation of the intermediates secopenitrem D and penitrem D. PtmL catalyzes the epoxidation of penitrem D and C to yield penitrem B and F, respectively. PtmJ catalyzes the last benzylic hydroxylation to convert penitrem B to prenitrem E and penitrem F to penitrem A. The polypeptide is Geranylgeranyl pyrophosphate synthase penG (Penicillium ochrochloron).